The primary structure comprises 1526 residues: Ig-like and fibronectin type-III domain-containing protein 2 (1526 aa).

A signal peptide spans 1–19 (MMRWRLAVLFLTLLASTTG). Residues 20-39 (DDTTTKASVSTTTKKGTDGP) form a disordered region. Over 20-1415 (DDTTTKASVS…RRSASKGSSS (1396 aa)) the chain is Extracellular. Positions 24-33 (TKASVSTTTK) are enriched in low complexity. The Ig-like C2-type 1 domain occupies 39-170 (PHLTTDDEGF…ELLEFQVEVL (132 aa)). C61 and C154 are joined by a disulfide. N87, N143, N158, N181, N414, N427, N475, N489, N533, N590, N617, and N662 each carry an N-linked (GlcNAc...) asparagine glycan. A Fibronectin type-III 1 domain is found at 379–470 (APRGKRDVDF…VRNIASTNVH (92 aa)). The 92-residue stretch at 587 to 678 (APGNVTISEL…TAKLFSTLPT (92 aa)) folds into the Fibronectin type-III 2 domain. One can recognise a WR1 domain in the interval 682 to 724 (PLCTIGEPIYMNDGRVMICDAVNPCPNGFRCTGAGSDLSYCCP). N-linked (GlcNAc...) asparagine glycosylation is found at N754, N871, N906, N939, N979, N1004, and N1049. 2 consecutive Fibronectin type-III domains span residues 827 to 914 (AVRN…TKPA) and 924 to 1020 (APEK…AQKD). An Ig-like C2-type 2 domain is found at 1116–1207 (ASVTMKKDKI…SRVEASSEVI (92 aa)). C1137 and C1190 are disulfide-bonded. N-linked (GlcNAc...) asparagine glycosylation is present at N1250. One can recognise a Fibronectin type-III 5 domain in the interval 1314 to 1406 (APSEVSNVRI…SAIPKDSEPR (93 aa)). Residues 1416-1436 (AFWIVVILVVFGVLIAGLAVL) form a helical membrane-spanning segment. At 1437–1526 (SKRRELPYPI…NGMRYAKLET (90 aa)) the chain is on the cytoplasmic side. A disordered region spans residues 1485–1518 (SATTGTAAATQSEWQSANLEANSTTDNSHEYRNG). Positions 1495-1510 (QSEWQSANLEANSTTD) are enriched in polar residues.

It localises to the cell membrane. The sequence is that of Ig-like and fibronectin type-III domain-containing protein 2 from Caenorhabditis elegans.